The following is a 497-amino-acid chain: Acetyltransferase FGR3 (497 aa).

Positions 221 and 224 each coordinate Ca(2+). 2 residues coordinate CoA: Lys255 and Asp303. Residue Asp386 coordinates Ca(2+). Position 396 (Thr396) interacts with CoA. Asp462 provides a ligand contact to Ca(2+). The disordered stretch occupies residues 477-497 (DASEAKKANGTNGTNGVNGSS). Positions 485–497 (NGTNGTNGVNGSS) are enriched in low complexity.

The protein belongs to the trichothecene 3-O-acetyltransferase family.

Its pathway is secondary metabolite biosynthesis. In terms of biological role, acetyltransferase; part of the gene cluster that mediates the biosynthesis of the tetraketides fugralins such as linear fugralin A and cyclic fugralin B, volatile compounds that play a role in the asexual reproductive cycle but are not involved in pathogenicity. One of the key features of fugralins is the presence of a double methyl group, which is only rarely encountered in fungal secondary metabolites. As the fugralins cluster does not contain an independent methyltransferase, the PKS FGR1 is probably responsible for adding two methyl groups to the same carbon atom. Fugralin B is similar to fugralin A except for a cyclization between the carboxylic acid C-8 and the alcohol on C-4 resulting in a six membered lactone ring, probably catalyzed by the cyclase FGR4. The exact role of the individual cluster genes remains unknown and further work is needed to unravel the biosynthetic pathway. The polypeptide is Acetyltransferase FGR3 (Gibberella zeae (strain ATCC MYA-4620 / CBS 123657 / FGSC 9075 / NRRL 31084 / PH-1) (Wheat head blight fungus)).